The primary structure comprises 128 residues: DNA-directed RNA polymerase subunit omega (128 aa).

A disordered region spans residues 87–106 (ARSSQAAPKSAPGQEIGKSF).

Belongs to the RNA polymerase subunit omega family. The RNAP catalytic core consists of 2 alpha, 1 beta, 1 beta' and 1 omega subunit. When a sigma factor is associated with the core the holoenzyme is formed, which can initiate transcription.

It carries out the reaction RNA(n) + a ribonucleoside 5'-triphosphate = RNA(n+1) + diphosphate. In terms of biological role, promotes RNA polymerase assembly. Latches the N- and C-terminal regions of the beta' subunit thereby facilitating its interaction with the beta and alpha subunits. In Anaplasma marginale (strain Florida), this protein is DNA-directed RNA polymerase subunit omega.